We begin with the raw amino-acid sequence, 505 residues long: Protein disulfide-isomerase A3 (505 aa).

The signal sequence occupies residues Met1 to Ala24. The Thioredoxin 1 domain occupies Ser25–Gly133. Residues Cys57 and Cys60 each act as nucleophile in the active site. Residues Cys57 and Cys60 are joined by a disulfide bond. An N6-methyllysine modification is found at Lys61. An intrachain disulfide couples Cys85 to Cys92. The residue at position 129 (Lys129) is an N6-succinyllysine. Lys152 is modified (N6-acetyllysine). The residue at position 218 (Lys218) is an N6-succinyllysine. Residue Lys252 is modified to N6-acetyllysine. Residue Thr319 is modified to Phosphothreonine. A Thioredoxin 2 domain is found at Ser343–Thr485. Lys362 carries the post-translational modification N6-acetyllysine. Active-site nucleophile residues include Cys406 and Cys409. The cysteines at positions 406 and 409 are disulfide-linked. Residues Ala484–Leu505 form a disordered region. Over residues Gln491–Leu505 the composition is skewed to basic and acidic residues. Lys494 is modified (N6-acetyllysine). Positions Gln502–Leu505 match the Prevents secretion from ER motif.

Belongs to the protein disulfide isomerase family. As to quaternary structure, part of the major histocompatibility complex class I (MHC I) peptide loading complex composed of TAP1, TAP2, B2M, MHC heavy chain, TAPBP, PDIA3, and CALR. Interacts with ERP27 and CANX. Interacts with SERPINA2 and with SERPINA1. Interacts with ATP2A2. In terms of processing, within the major histocompatibility complex class I (MHC I) peptide loading complex forms reversible disulfide-linked heterodimers with TAPBP as part of its protein folding chaperone activity. This is essential to assist the dynamic assembly of the MHC I complex with high affinity antigens in the endoplasmic reticulum. Phosphorylated. As to expression, in caput epididymal spermatozoa, detected in the head, mid and principal pieces. In cauda epididymal spermatozoa detected only in the acrosome (at protein level).

The protein localises to the endoplasmic reticulum. The protein resides in the endoplasmic reticulum lumen. Its subcellular location is the melanosome. It catalyses the reaction Catalyzes the rearrangement of -S-S- bonds in proteins.. With respect to regulation, seems to be inhibited by acidic phospholipids. In terms of biological role, protein disulfide isomerase that catalyzes the formation, isomerization, and reduction or oxidation of disulfide bonds in client proteins and functions as a protein folding chaperone. Core component of the major histocompatibility complex class I (MHC I) peptide loading complex where it functions as an essential folding chaperone for TAPBP. Through TAPBP, assists the dynamic assembly of the MHC I complex with high affinity antigens in the endoplasmic reticulum. Therefore, plays a crucial role in the presentation of antigens to cytotoxic T cells in adaptive immunity. The sequence is that of Protein disulfide-isomerase A3 (Pdia3) from Rattus norvegicus (Rat).